Reading from the N-terminus, the 347-residue chain is MSEQAIRLTQYSHGAGCGCKISPKVLETILHSEQAKFVDPNLLVGNETRDDAAVYDLGNGTSIISTTDFFMPIVDNPFDFGRIAATNAISDIFAMGGKPIMAIAILGWPINTLSPDIAREVTEGGRFACRQAGIALAGGHSIDAPEPIFGLAVTGVVPTERVKKNSTAQAGCKLFLTKPLGIGVLTTAEKKSLLKPEHQGLATEVMCRMNVAGAAFANIDGVKAMTDVTGFGLLGHLSEMCQGAGVQALLCYQDIPKLPGVEEYIALGAVPGGTERNFASYGHLMGDMSREVRSLLCDPQTSGGLLLAVTPDAEDDVKATAAEFGIDLTAIGELVEARGGRAMVEIR.

The active site involves cysteine 17. ATP-binding positions include lysine 20 and 48–50 (TRD). Position 51 (aspartate 51) interacts with Mg(2+). Residues aspartate 68, aspartate 91, and 139 to 141 (GHS) contribute to the ATP site. Residue aspartate 91 coordinates Mg(2+). Residue aspartate 227 coordinates Mg(2+).

The protein belongs to the selenophosphate synthase 1 family. Class I subfamily. As to quaternary structure, homodimer. The cofactor is Mg(2+).

It carries out the reaction hydrogenselenide + ATP + H2O = selenophosphate + AMP + phosphate + 2 H(+). In terms of biological role, synthesizes selenophosphate from selenide and ATP. In Salmonella typhimurium (strain LT2 / SGSC1412 / ATCC 700720), this protein is Selenide, water dikinase.